We begin with the raw amino-acid sequence, 948 residues long: Probable disease resistance protein At5g47260 (948 aa).

The stretch at 20–57 (RKYLYNLERNLEALHKVMQDLNAMRNDLLKRLSKEEEI) forms a coiled coil. One can recognise an NB-ARC domain in the interval 134-432 (HRALPPLVIK…CEGILAKEDR (299 aa)). 176–183 (GRGGVGKT) lines the ATP pocket. LRR repeat units lie at residues 498–519 (MIRR…PQCS), 520–542 (ELTT…FFQW), 545–567 (GLVV…VSSL), 569–591 (LLRF…KELK), 592–614 (SLIH…ASLL), 615–636 (NLQV…EDIQ), 640–661 (SLKE…LSIQ), 666–686 (SIRR…LSLN), and 690–711 (SLCE…WRCT).

The protein belongs to the disease resistance NB-LRR family.

In terms of biological role, potential disease resistance protein. The sequence is that of Probable disease resistance protein At5g47260 from Arabidopsis thaliana (Mouse-ear cress).